Consider the following 136-residue polypeptide: Transmembrane protein 203 (136 aa).

4 helical membrane passes run 14–34 (FAQL…VLLA), 50–72 (FIPF…VRLF), 81–101 (VLRL…EMLL), and 112–132 (LWYG…MIRA).

It localises to the endoplasmic reticulum membrane. Its subcellular location is the endoplasmic reticulum-Golgi intermediate compartment. Involved in the regulation of cellular calcium homeotasis. May act as a regulator of STING-mediated inflammatory signaling in macrophages. This Xenopus laevis (African clawed frog) protein is Transmembrane protein 203 (tmem203).